A 390-amino-acid chain; its full sequence is MKFVDEASILVVAGDGGNGCVSFRREKYIPKGGPDGGDGGDGGDVWLEADENLNTLIDYRFEKSFRAERGQNGASRDCTGKRGKDVTIKVPVGTRVIDQGTGETMGDMTKHGQRLMVAKGGWHGLGNTRFKSSVNRTPRQKTMGTPGDKRDLMLELMLLADVGMLGMPNAGKSTFIRAVSAAKPKVADYPFTTLVPSLGVVRMDNEKSFVVADIPGLIEGAAEGAGLGIRFLKHLERCRVLLHLIDIDPIDGSDPVENARIIIGELEKYSQDLAAKPRWLVFNKIDLLDQAEAEEKAKAIAQALGWEDKYYMISAASQTGVKDLCWDVMTFIIENPIVQADEAKQPEKVEFMWDDYHRQQLAEVEDEAEDDWDDDWDEDDEEGVEFIYKR.

The Obg domain occupies 1-159 (MKFVDEASIL…RDLMLELMLL (159 aa)). The disordered stretch occupies residues 127–147 (NTRFKSSVNRTPRQKTMGTPG). The segment covering 129-143 (RFKSSVNRTPRQKTM) has biased composition (polar residues). In terms of domain architecture, OBG-type G spans 160–333 (ADVGMLGMPN…LCWDVMTFII (174 aa)). GTP is bound by residues 166–173 (GMPNAGKS), 191–195 (FTTLV), 213–216 (DIPG), 283–286 (NKID), and 314–316 (SAA). 2 residues coordinate Mg(2+): Ser173 and Thr193.

It belongs to the TRAFAC class OBG-HflX-like GTPase superfamily. OBG GTPase family. Monomer. It depends on Mg(2+) as a cofactor.

The protein resides in the cytoplasm. Its function is as follows. An essential GTPase which binds GTP, GDP and possibly (p)ppGpp with moderate affinity, with high nucleotide exchange rates and a fairly low GTP hydrolysis rate. Plays a role in control of the cell cycle, stress response, ribosome biogenesis and in those bacteria that undergo differentiation, in morphogenesis control. The polypeptide is GTPase Obg (Citrobacter koseri (strain ATCC BAA-895 / CDC 4225-83 / SGSC4696)).